A 366-amino-acid chain; its full sequence is 3-dehydroquinate synthase (366 aa).

NAD(+) is bound by residues 71–76 (DGEQYK), 105–109 (GVIGD), 129–130 (TT), K142, K151, and 169–172 (CLQT). Residues E184, H248, and H265 each contribute to the Zn(2+) site.

Belongs to the sugar phosphate cyclases superfamily. Dehydroquinate synthase family. It depends on NAD(+) as a cofactor. Co(2+) serves as cofactor. The cofactor is Zn(2+).

The protein resides in the cytoplasm. It catalyses the reaction 7-phospho-2-dehydro-3-deoxy-D-arabino-heptonate = 3-dehydroquinate + phosphate. It functions in the pathway metabolic intermediate biosynthesis; chorismate biosynthesis; chorismate from D-erythrose 4-phosphate and phosphoenolpyruvate: step 2/7. Its function is as follows. Catalyzes the conversion of 3-deoxy-D-arabino-heptulosonate 7-phosphate (DAHP) to dehydroquinate (DHQ). The protein is 3-dehydroquinate synthase of Photorhabdus laumondii subsp. laumondii (strain DSM 15139 / CIP 105565 / TT01) (Photorhabdus luminescens subsp. laumondii).